The primary structure comprises 639 residues: Far upstream element-binding protein 1 (639 aa).

2 disordered regions span residues 1–27 and 40–88; these read MADY…NDAF and KIGG…LPPM. N-acetylalanine is present on Ala-2. A compositionally biased stretch (gly residues) spans 14–23; the sequence is SAGGGGGGGV. Phosphoserine is present on residues Ser-48 and Ser-51. Positions 61–73 are enriched in basic and acidic residues; it reads RPLEDGDQPDAKK. 3 consecutive KH domains span residues 95–159, 180–246, and 270–334; these read VMTE…KRLL, NAVQ…KEMV, and NEGI…AEII. Residue Ser-135 is modified to Phosphoserine. The residue at position 148 (Thr-148) is a Phosphothreonine. Omega-N-methylarginine is present on residues Arg-316, Arg-354, Arg-356, and Arg-358. Positions 341–360 are disordered; sequence VQAGNPGGPGPGGRGRGRGQ. Residues 345–360 show a composition bias toward gly residues; sequence NPGGPGPGGRGRGRGQ. A KH 4 domain is found at 371–438; the sequence is LQEFNFIVPT…QQIDYARQLI (68 aa). Phosphothreonine is present on Thr-427. Disordered stretches follow at residues 442 to 527 and 543 to 574; these read IGGP…GTDP and QAQP…PAGQ. The span at 463-500 shows a compositional bias: pro residues; it reads PHGPPGPPGPGTPMGPYNPAPYNPGPPGPAPHGPPAPY. Residues 551–568 are compositionally biased toward low complexity; it reads PAGAPTTTQTNGQGDQQN. At Ser-625 the chain carries Phosphoserine.

In terms of assembly, found in a complex with PUF60 and far upstream element (FUSE) DNA segment. Interacts with PUF60 and JTV1. Post-translationally, ubiquitinated. This targets the protein for proteasome-mediated degradation.

The protein localises to the nucleus. Its function is as follows. Regulates MYC expression by binding to a single-stranded far-upstream element (FUSE) upstream of the MYC promoter. May act both as activator and repressor of transcription. The polypeptide is Far upstream element-binding protein 1 (Rattus norvegicus (Rat)).